Here is a 411-residue protein sequence, read N- to C-terminus: Dual-specificity RNA methyltransferase RlmN (411 aa).

The active-site Proton acceptor is the E125. Positions 131 to 380 constitute a Radical SAM core domain; the sequence is EEGRGTLCIS…IRTPRGRDIL (250 aa). A disulfide bridge connects residues C138 and C383. Positions 145, 149, and 152 each coordinate [4Fe-4S] cluster. Residues 209-210, S241, 263-265, and N340 contribute to the S-adenosyl-L-methionine site; these read GE and SLH. Catalysis depends on C383, which acts as the S-methylcysteine intermediate.

Belongs to the radical SAM superfamily. RlmN family. It depends on [4Fe-4S] cluster as a cofactor.

The protein resides in the cytoplasm. It carries out the reaction adenosine(2503) in 23S rRNA + 2 reduced [2Fe-2S]-[ferredoxin] + 2 S-adenosyl-L-methionine = 2-methyladenosine(2503) in 23S rRNA + 5'-deoxyadenosine + L-methionine + 2 oxidized [2Fe-2S]-[ferredoxin] + S-adenosyl-L-homocysteine. The enzyme catalyses adenosine(37) in tRNA + 2 reduced [2Fe-2S]-[ferredoxin] + 2 S-adenosyl-L-methionine = 2-methyladenosine(37) in tRNA + 5'-deoxyadenosine + L-methionine + 2 oxidized [2Fe-2S]-[ferredoxin] + S-adenosyl-L-homocysteine. In terms of biological role, specifically methylates position 2 of adenine 2503 in 23S rRNA and position 2 of adenine 37 in tRNAs. m2A2503 modification seems to play a crucial role in the proofreading step occurring at the peptidyl transferase center and thus would serve to optimize ribosomal fidelity. This chain is Dual-specificity RNA methyltransferase RlmN, found in Brucella suis biovar 1 (strain 1330).